The sequence spans 800 residues: DNA topoisomerase 4 subunit A (800 aa).

The Topo IIA-type catalytic domain occupies 31 to 495 (LPDVRDGLKP…EIEEIKIDKE (465 aa)). Tyrosine 119 acts as the O-(5'-phospho-DNA)-tyrosine intermediate in catalysis.

This sequence belongs to the type II topoisomerase GyrA/ParC subunit family. ParC type 2 subfamily. Heterotetramer composed of ParC and ParE.

Its subcellular location is the cell membrane. The enzyme catalyses ATP-dependent breakage, passage and rejoining of double-stranded DNA.. In terms of biological role, topoisomerase IV is essential for chromosome segregation. It relaxes supercoiled DNA. Performs the decatenation events required during the replication of a circular DNA molecule. In Staphylococcus aureus (strain MSSA476), this protein is DNA topoisomerase 4 subunit A.